The chain runs to 265 residues: MASSNLLTLALFLVLLTHANSSNDASFNVETFNKTNLILQGDATVSSEGHLLLTNVKGNEEDSMGRAFYSAPIQINDRTIDNLASFSTNFTFRINAKNNENSAYGLAFALVPVGSRPKLKGRYLGLFNTANYDRDAHTVAVVFDTVSNRIEIDVNSIRPIATESCNFGHNNGEKAEVRITYYSPKNDLRVSLLYPSSEEKCHVSATVPLEKEVEDWVSVGFSATSGSKKETTETHNVLSWSFSSNFINFEGKKSERSNILLNKIL.

The N-terminal stretch at 1–21 is a signal peptide; that stretch reads MASSNLLTLALFLVLLTHANS. Asparagine 33 and asparagine 89 each carry an N-linked (GlcNAc...) asparagine glycan. Cysteine 165 and cysteine 201 are disulfide-bonded.

It belongs to the leguminous lectin family.

In terms of biological role, seed storage. This carbohydrate-binding lectin has toxic effects on bean bruchid pests. Antibiosis properties of legume lectins are proposed to be due to the lysis of epithelial cells of the intestine by binding to the carbohydrate moieties of these proteins. The polypeptide is Arcelin-2 (ARC2) (Phaseolus vulgaris (Kidney bean)).